Reading from the N-terminus, the 396-residue chain is Dimethyladenosine transferase 2, mitochondrial (396 aa).

Residues 1–19 (MWIPVVGLPRRLRLSALAG) constitute a mitochondrion transit peptide. The disordered stretch occupies residues 44 to 64 (LSDSSPQLWPEPDFRNPPRKA). Residues V75, E124, and D150 each contribute to the S-adenosyl-L-methionine site. Residues 330 to 331 (RR) form a DNA-binding region.

It belongs to the class I-like SAM-binding methyltransferase superfamily. rRNA adenine N(6)-methyltransferase family. KsgA subfamily. As to quaternary structure, homodimer. Component of the mitochondrial transcription initiation complex, composed at least of TFB2M, TFAM and POLRMT. In this complex TFAM recruits POLRMT to the promoter whereas TFB2M induces structural changes in POLRMT to enable promoter opening and trapping of the DNA non-template strand. Interacts with mitochondrial RNA polymerase POLRMT. Interacts with TFAM. As to expression, ubiquitously expressed.

Its subcellular location is the mitochondrion. It carries out the reaction adenosine in rRNA + S-adenosyl-L-methionine = N(6)-methyladenosine in rRNA + S-adenosyl-L-homocysteine + H(+). S-adenosyl-L-methionine-dependent rRNA methyltransferase which may methylate two specific adjacent adenosines in the loop of a conserved hairpin near the 3'-end of 12S mitochondrial rRNA. Component of the mitochondrial transcription initiation complex, composed at least of TFB2M, TFAM and POLRMT that is required for basal transcription of mitochondrial DNA. In this complex, TFAM recruits POLRMT to a specific promoter whereas TFB2M induces structural changes in POLRMT to enable promoter opening and trapping of the DNA non-template strand. Stimulates transcription independently of the methyltransferase activity. This Homo sapiens (Human) protein is Dimethyladenosine transferase 2, mitochondrial.